The primary structure comprises 487 residues: ATP synthase subunit beta (487 aa).

An ATP-binding site is contributed by 171–178 (GGAGVGKT).

The protein belongs to the ATPase alpha/beta chains family. As to quaternary structure, F-type ATPases have 2 components, CF(1) - the catalytic core - and CF(0) - the membrane proton channel. CF(1) has five subunits: alpha(3), beta(3), gamma(1), delta(1), epsilon(1). CF(0) has three main subunits: a(1), b(2) and c(9-12). The alpha and beta chains form an alternating ring which encloses part of the gamma chain. CF(1) is attached to CF(0) by a central stalk formed by the gamma and epsilon chains, while a peripheral stalk is formed by the delta and b chains.

It is found in the cell membrane. It carries out the reaction ATP + H2O + 4 H(+)(in) = ADP + phosphate + 5 H(+)(out). Functionally, produces ATP from ADP in the presence of a proton gradient across the membrane. The catalytic sites are hosted primarily by the beta subunits. This Leifsonia xyli subsp. xyli (strain CTCB07) protein is ATP synthase subunit beta.